A 112-amino-acid chain; its full sequence is Protein lin-52 homolog (112 aa).

It belongs to the lin-52 family. As to quaternary structure, component of the DREAM complex.

The polypeptide is Protein lin-52 homolog (lin52) (Tetraodon nigroviridis (Spotted green pufferfish)).